The sequence spans 111 residues: Phosphoribosyl-ATP pyrophosphatase (111 aa).

Belongs to the PRA-PH family.

It is found in the cytoplasm. It carries out the reaction 1-(5-phospho-beta-D-ribosyl)-ATP + H2O = 1-(5-phospho-beta-D-ribosyl)-5'-AMP + diphosphate + H(+). Its pathway is amino-acid biosynthesis; L-histidine biosynthesis; L-histidine from 5-phospho-alpha-D-ribose 1-diphosphate: step 2/9. The protein is Phosphoribosyl-ATP pyrophosphatase of Pseudomonas putida (strain W619).